A 402-amino-acid polypeptide reads, in one-letter code: Type II NADH:quinone oxidoreductase (402 aa).

Residues 12-16 (GAGYA), 39-40 (NK), and Val83 contribute to the FAD site. The active site involves Glu172. Residues Asp302, 319–320 (AQ), and Lys379 contribute to the FAD site.

This sequence belongs to the NADH dehydrogenase family. It depends on FAD as a cofactor.

The protein resides in the cell membrane. It carries out the reaction a quinone + NADH + H(+) = a quinol + NAD(+). In terms of biological role, alternative, nonproton pumping NADH:quinone oxidoreductase that delivers electrons to the respiratory chain by oxidation of NADH and reduction of quinones, and contributes to the regeneration of NAD(+). This is Type II NADH:quinone oxidoreductase from Staphylococcus epidermidis (strain ATCC 12228 / FDA PCI 1200).